Here is a 504-residue protein sequence, read N- to C-terminus: L-carnitine/gamma-butyrobetaine antiporter (504 aa).

12 helical membrane passes run 10 to 30 (IEPKVFFPPLIIVGILCWLTV), 51 to 71 (WGWAFEWYMVVMLFGWFWLVF), 92 to 112 (IFMMFASCTSAAVLFWGSIEI), 143 to 163 (GPLPWATYSFLSVAFAYFFFV), 195 to 215 (FYLVALIFAMGTSLGLATPLV), 231 to 251 (LDAIIITCWIILHAICVACGL), 263 to 283 (SYLSFLMLGWVFIVSGASFIM), 316 to 336 (WTVFYWAWWVIYAIQMSIFLA), 347 to 367 (LCFGMVMGLTASTWILWTVLG), 398 to 418 (WAALPLSTATMWGFFILCFIA), 446 to 466 (LLVRIGWSILVGIIGIVLLAL), and 475 to 495 (AIIAGGCPLFFVNIMVTLSFI).

This sequence belongs to the BCCT transporter (TC 2.A.15) family. CaiT subfamily. Homotrimer.

The protein localises to the cell inner membrane. It catalyses the reaction 4-(trimethylamino)butanoate(in) + (R)-carnitine(out) = 4-(trimethylamino)butanoate(out) + (R)-carnitine(in). It participates in amine and polyamine metabolism; carnitine metabolism. In terms of biological role, catalyzes the exchange of L-carnitine for gamma-butyrobetaine. The polypeptide is L-carnitine/gamma-butyrobetaine antiporter (Shigella flexneri serotype 5b (strain 8401)).